A 2485-amino-acid chain; its full sequence is Tyrosine-protein phosphatase non-receptor type 13 (2485 aa).

The region spanning 3–190 is the KIND domain; that stretch reads VSLAEALEVR…SGTDQLSCNS (188 aa). The tract at residues 186-220 is disordered; sequence LSCNSEQKPDRSQAIRDRLRGKGLPTGRSSTSDVL. A compositionally biased stretch (basic and acidic residues) spans 192 to 205; that stretch reads QKPDRSQAIRDRLR. Ser240 carries the post-translational modification Phosphoserine. The tract at residues 260–283 is disordered; sequence SDNSGREDSENTFSPYQFKTSGPE. Polar residues predominate over residues 270 to 279; sequence NTFSPYQFKT. A phosphoserine mark is found at Ser301 and Ser302. The tract at residues 433–467 is disordered; it reads RSEASKRFESSSGLPGVDETLSQGQSQRPSRQYET. The segment covering 452–465 has biased composition (polar residues); it reads TLSQGQSQRPSRQY. The stretch at 469-504 forms a coiled coil; the sequence is FEGNLINQEIMLKRQEEELMQLQAKMALRQSRLSLY. Residues 572–872 enclose the FERM domain; the sequence is RKVNIMLLNG…YQHKFQLQMR (301 aa). Residues Ser890, Ser897, Ser908, Ser911, and Ser914 each carry the phosphoserine modification. 2 disordered regions span residues 947–975 and 995–1049; these read QNSSKEKNDKASWEEKPREMSKSYHDLSQ and TVAE…IEDP. The segment covering 950 to 971 has biased composition (basic and acidic residues); it reads SKEKNDKASWEEKPREMSKSYH. The span at 1020–1032 shows a compositional bias: polar residues; the sequence is KLNNSKSVASLNR. 3 positions are modified to phosphoserine: Ser1029, Ser1033, and Ser1085. Residues 1033-1042 are compositionally biased toward basic and acidic residues; the sequence is SPERRKHESD. A PDZ 1 domain is found at 1093 to 1178; sequence LVNLKKDAKY…EDVTLVISQP (86 aa). Disordered regions lie at residues 1227 to 1258 and 1273 to 1362; these read HISENSFGPSGGLREGSLSSQDSRTESASLSQ and TWQE…SPPK. Composition is skewed to polar residues over residues 1243 to 1258, 1273 to 1288, and 1327 to 1359; these read SLSSQDSRTESASLSQ, TWQESQHGSPSPSVIS, and TYSSSQDHQTPKQESSSSVNTSNKMNFKTFSSS. PDZ domains are found at residues 1368-1452 and 1501-1588; these read EVEL…LEKG and EVKL…LCRP. Residues 1608–1630 are compositionally biased toward polar residues; sequence AQVLPNSSKDSSQPSCVEQSTSS. 2 disordered regions span residues 1608–1665 and 1715–1751; these read AQVL…DLVT and PNKPEFEDSNPSPLPPDMAPGQSYQPQSESASSSSMD. Over residues 1736-1749 the composition is skewed to low complexity; sequence QSYQPQSESASSSS. PDZ domains follow at residues 1788–1868 and 1882–1965; these read LITL…IGRV and PDIT…ATRN. The interval 1971 to 1996 is disordered; sequence PSSKRSAVSAPKSTKGNGSYSVGSCS. Over residues 1973–1996 the composition is skewed to polar residues; it reads SKRSAVSAPKSTKGNGSYSVGSCS. Positions 2213–2467 constitute a Tyrosine-protein phosphatase domain; it reads PSKELENLQE…IFCYQVILYV (255 aa). Substrate-binding positions include Asp2378, 2408 to 2414, and Gln2452; that span reads CSAGIGR. Cys2408 (phosphocysteine intermediate) is an active-site residue. The segment at 2408 to 2414 is substrate; sequence CSAGIGR.

Belongs to the protein-tyrosine phosphatase family. Non-receptor class subfamily. As to quaternary structure, interacts (via the first PDZ domain) with PLEKHA1 and PLEKHA2. Interacts (via the second PDZ domain) with TNFRSF6 (Fas receptor) (via C-terminus). Interacts (via the second PDZ domain) with TRIP6 (via the third LIM domain and C-terminus). Interacts (via the third PDZ domain) with NGFR (via C-terminal SVP motif) and PKN2 (via C-terminus). Interacts (via the second or fourth PDZ domains) with PDLIM4 (via C-terminus only or via combined C-terminus and LIM domain, but not LIM domain only). Found in a complex with PDLIM4 and TRIP6. Interacts with PDLIM4; this interaction results in dephosphorylation of SRC 'Tyr-419' by this protein leading to its inactivation. Interacts with BRD7. Interacts with RAPGEF6. Interacts with ARHGAP29. Interacts with PIK3R2; dephosphorylates PIK3R2. Interacts with FBXL2. Interacts (via the FERM domain) with ENTR1. Found in a complex with ENTR1, PTPN13 and GIT1. As to expression, expressed in keratinocytes (at protein level). Present in most tissues with the exception of the liver and skeletal muscle. Most abundant in lung, kidney and fetal brain.

It is found in the cytoplasm. Its subcellular location is the cytoskeleton. The protein resides in the nucleus. It localises to the cell projection. The protein localises to the lamellipodium. It carries out the reaction O-phospho-L-tyrosyl-[protein] + H2O = L-tyrosyl-[protein] + phosphate. Tyrosine phosphatase which negatively regulates FAS-induced apoptosis and NGFR-mediated pro-apoptotic signaling. May regulate phosphoinositide 3-kinase (PI3K) signaling through dephosphorylation of PIK3R2. This is Tyrosine-protein phosphatase non-receptor type 13 (PTPN13) from Homo sapiens (Human).